We begin with the raw amino-acid sequence, 3387 residues long: Genome polyprotein (3387 aa).

Topologically, residues 1-100 (MNQRKKVVRP…LNILNGRKRS (100 aa)) are cytoplasmic. Residues 36–71 (LFSGKGPLRMVLAFITFLRVLSIPPTAGILKRWGQL) are hydrophobic; homodimerization of capsid protein C. A propeptide spans 100-113 (STVTLLCLIPTVMA) (ER anchor for the capsid protein C, removed in mature form by serine protease NS3). The helical transmembrane segment at 101–117 (TVTLLCLIPTVMAFHLS) threads the bilayer. The Extracellular portion of the chain corresponds to 118-237 (TRDGEPLMIV…GAWKHAQRVE (120 aa)). The N-linked (GlcNAc...) asparagine; by host glycan is linked to Asn-182. The helical transmembrane segment at 238 to 258 (SWILRNPGFALLAGFMAYMIG) threads the bilayer. The Cytoplasmic portion of the chain corresponds to 259–265 (QTGIQRT). The chain crosses the membrane as a helical span at residues 266–279 (VFFVLMMLVAPSYG). At 280–725 (MRCIGVGNRD…HQVFGSVYTT (446 aa)) the chain is on the extracellular side. 4 disulfide bridges follow: Cys-282/Cys-309, Cys-339/Cys-400, Cys-353/Cys-384, and Cys-371/Cys-395. Asn-346 carries an N-linked (GlcNAc...) asparagine; by host glycan. The tract at residues 377–390 (DRGWGNGCGLFGKG) is fusion peptide. Asn-432 carries N-linked (GlcNAc...) asparagine; by host glycosylation. 2 disulfide bridges follow: Cys-464/Cys-564 and Cys-581/Cys-612. A helical transmembrane segment spans residues 726-746 (MFGGVSWMVRILIGLLVLWIG). The Cytoplasmic portion of the chain corresponds to 747–751 (TNSRN). Residues 752–772 (TPMAMTCIAVGGITLFLGFTV) traverse the membrane as a helical segment. At 773–1193 (QADMGCVVSW…IMLGDTMLSR (421 aa)) the chain is on the extracellular side. 6 disulfide bridges follow: Cys-778–Cys-789, Cys-829–Cys-917, Cys-953–Cys-997, Cys-1054–Cys-1103, Cys-1065–Cys-1087, and Cys-1086–Cys-1090. Asn-904 and Asn-981 each carry an N-linked (GlcNAc...) asparagine; by host glycan. The chain crosses the membrane as a helical span at residues 1194–1218 (VGGQTHLAIMIVFKMSPGYVLGVFL). Over 1219–1224 (RKLTSR) the chain is Lumenal. A helical membrane pass occupies residues 1225–1243 (ETALMVIGMAMTTVFSIPH). Topologically, residues 1244–1267 (DLMELIDGISLGLILLKMVTHFDN) are cytoplasmic. Residues 1268–1288 (TQVGTLALSLTFIRSTMPLTM) traverse the membrane as a helical segment. Position 1289 (Ala-1289) is a topological domain, lumenal. The helical transmembrane segment at 1290-1308 (WRTIMAVLFAVTLIPLCRT) threads the bilayer. Topologically, residues 1309–1316 (SCLQKQSH) are lumenal. The helical transmembrane segment at 1317 to 1337 (WVEITAIILGAQALPVYLMTL) threads the bilayer. The Cytoplasmic segment spans residues 1338-1345 (MKGASKRS). The helical transmembrane segment at 1346–1366 (WPLNEGIMAVGLVSLLGSALL) threads the bilayer. Topologically, residues 1367–1369 (KND) are lumenal. The helical transmembrane segment at 1370 to 1390 (VPLAGPMVAGGLLLAAYVMSG) threads the bilayer. At 1391–1444 (SSADLSLERAANVQWDEMADITGSSPIIEVKQDEDGSFSIRDVEETNMITLLVK) the chain is on the cytoplasmic side. Residues 1397–1436 (LERAANVQWDEMADITGSSPIIEVKQDEDGSFSIRDVEET) are interacts with and activates NS3 protease. Positions 1445–1465 (LALITVSGLYPLAIPITMTLW) form an intramembrane region, helical. At 1466-2146 (YMWQVRTQRS…LNELPESLET (681 aa)) the chain is on the cytoplasmic side. One can recognise a Peptidase S7 domain in the interval 1475–1652 (SGALWDVPSP…ERIGEPDYEV (178 aa)). Active-site charge relay system; for serine protease NS3 activity residues include His-1525, Asp-1549, and Ser-1609. The Helicase ATP-binding domain occupies 1654–1810 (EDIFRKKRLT…QSNSPIEDIE (157 aa)). The important for RNA-binding stretch occupies residues 1658–1661 (RKKR). 1667 to 1674 (LHPGAGKT) serves as a coordination point for ATP. A DEAH box motif is present at residues 1758-1761 (DEAH). Positions 1820-1987 (TGFDWITDYQ…IIPTLFGPER (168 aa)) constitute a Helicase C-terminal domain. Lys-1862 is subject to N6-acetyllysine; by host. The chain crosses the membrane as a helical span at residues 2147–2167 (LMLVALLGAMTAGIFLFFMQG). The Lumenal portion of the chain corresponds to 2168-2169 (KG). Residues 2170–2190 (IGKLSVGLIAIAVASGLLWVA) constitute an intramembrane region (helical). Glu-2191 is a topological domain (lumenal). The chain crosses the membrane as a helical span at residues 2192-2212 (IQPQWIAASIILEFFLMVLLI). Residues 2213 to 2225 (PEPEKQRTPQDNQ) are Cytoplasmic-facing. A helical transmembrane segment spans residues 2226–2246 (LIYVILAILTIIGLVAANEMG). The Lumenal portion of the chain corresponds to 2247-2270 (LIEKTKADFGFYQVKTETTILDVD). An intramembrane region (helical) is located at residues 2271-2291 (LRPASAWTLYAVATTILTPML). The Lumenal portion of the chain corresponds to 2292–2301 (RHTIENTSAN). N-linked (GlcNAc...) asparagine; by host glycosylation is found at Asn-2297 and Asn-2301. Residues 2302–2322 (LSLAAIANQAAVLMGLGKGWP) constitute an intramembrane region (helical). Topologically, residues 2323-2343 (LHRMDLGVPLLAMGCYSQVNP) are lumenal. The helical transmembrane segment at 2344–2364 (TTLTASLVMLLVHYAIIGPGL) threads the bilayer. Topologically, residues 2365 to 2409 (QAKATREAQKRTAAGIMKNPTVDGITVIDLEPISYDPKFEKQLGQ) are cytoplasmic. Residues 2410–2430 (VMLLVLCAGQLLLMRTTWAFC) traverse the membrane as a helical segment. The Lumenal segment spans residues 2431 to 2455 (EVLTLATGPVLTLWEGNPGRFWNTT). Asn-2453 is a glycosylation site (N-linked (GlcNAc...) asparagine; by host). A helical transmembrane segment spans residues 2456–2476 (IAVSTANIFRGSYLAGAGLAF). Residues 2477–3387 (SLIKNAQTPR…SALSESEGVL (911 aa)) lie on the Cytoplasmic side of the membrane. The 263-residue stretch at 2489–2751 (TGTTGETLGE…DVDLGAGTRS (263 aa)) folds into the mRNA cap 0-1 NS5-type MT domain. Ser-2543 lines the S-adenosyl-L-methionine pocket. Residue Ser-2543 is modified to Phosphoserine. The active-site For 2'-O-MTase activity is the Lys-2548. The SUMO-interacting motif signature appears at 2564 to 2567 (VVDL). 6 residues coordinate S-adenosyl-L-methionine: Gly-2573, Trp-2574, Thr-2591, Lys-2592, Asp-2618, and Val-2619. Asp-2633 functions as the For 2'-O-MTase activity in the catalytic mechanism. Residue Ile-2634 participates in S-adenosyl-L-methionine binding. Residues Lys-2668 and Glu-2704 each act as for 2'-O-MTase activity in the active site. Tyr-2706 provides a ligand contact to S-adenosyl-L-methionine. Zn(2+)-binding residues include Glu-2925, His-2929, Cys-2934, and Cys-2937. Residues 3016 to 3166 (LMYADDTAGW…PLDERFSTSL (151 aa)) enclose the RdRp catalytic domain. Positions 3200, 3216, and 3335 each coordinate Zn(2+).

The protein in the N-terminal section; belongs to the class I-like SAM-binding methyltransferase superfamily. mRNA cap 0-1 NS5-type methyltransferase family. Homodimer. Interacts (via N-terminus) with host EXOC1 (via C-terminus); this interaction results in EXOC1 degradation through the proteasome degradation pathway. In terms of assembly, forms heterodimers with envelope protein E in the endoplasmic reticulum and Golgi. As to quaternary structure, homodimer; in the endoplasmic reticulum and Golgi. Interacts with protein prM. Interacts with non-structural protein 1. Homodimer; Homohexamer when secreted. Interacts with envelope protein E. In terms of assembly, interacts (via N-terminus) with serine protease NS3. As to quaternary structure, forms a heterodimer with serine protease NS3. May form homooligomers. Forms a heterodimer with NS2B. Interacts with NS4B. Interacts with unphosphorylated RNA-directed RNA polymerase NS5; this interaction stimulates RNA-directed RNA polymerase NS5 guanylyltransferase activity. Interacts with host SHFL. In terms of assembly, interacts with host MAVS; this interaction inhibits the synthesis of IFN-beta. Interacts with host SHFL. Interacts with host AUP1; the interaction occurs in the presence of Dengue virus NS4B and induces lipophagy which facilitates production of virus progeny particles. As to quaternary structure, interacts with serine protease NS3. Homodimer. Interacts with host STAT2; this interaction inhibits the phosphorylation of the latter, and, when all viral proteins are present (polyprotein), targets STAT2 for degradation. Interacts with serine protease NS3. Interacts with host PAF1 complex; the interaction may prevent the recruitment of the PAF1 complex to interferon-responsive genes, and thus reduces the immune response. In terms of processing, specific enzymatic cleavages in vivo yield mature proteins. Cleavages in the lumen of endoplasmic reticulum are performed by host signal peptidase, whereas cleavages in the cytoplasmic side are performed by serine protease NS3. Signal cleavage at the 2K-4B site requires a prior NS3 protease-mediated cleavage at the 4A-2K site. Post-translationally, cleaved in post-Golgi vesicles by a host furin, releasing the mature small envelope protein M, and peptide pr. This cleavage is incomplete as up to 30% of viral particles still carry uncleaved prM. N-glycosylated. In terms of processing, N-glycosylated. The excreted form is glycosylated and this is required for efficient secretion of the protein from infected cells. Post-translationally, acetylated by host KAT5. Acetylation modulates NS3 RNA-binding and unwinding activities and plays an important positive role for viral replication. Sumoylation of RNA-directed RNA polymerase NS5 increases NS5 protein stability allowing proper viral RNA replication. In terms of processing, phosphorylated on serines residues. This phosphorylation may trigger NS5 nuclear localization.

Its subcellular location is the virion. It localises to the host nucleus. It is found in the host cytoplasm. The protein resides in the host perinuclear region. The protein localises to the secreted. Its subcellular location is the virion membrane. It localises to the host endoplasmic reticulum membrane. It is found in the host mitochondrion. The enzyme catalyses Selective hydrolysis of -Xaa-Xaa-|-Yaa- bonds in which each of the Xaa can be either Arg or Lys and Yaa can be either Ser or Ala.. It catalyses the reaction RNA(n) + a ribonucleoside 5'-triphosphate = RNA(n+1) + diphosphate. It carries out the reaction a ribonucleoside 5'-triphosphate + H2O = a ribonucleoside 5'-diphosphate + phosphate + H(+). The catalysed reaction is ATP + H2O = ADP + phosphate + H(+). The enzyme catalyses a 5'-end (5'-triphosphoguanosine)-ribonucleoside in mRNA + S-adenosyl-L-methionine = a 5'-end (N(7)-methyl 5'-triphosphoguanosine)-ribonucleoside in mRNA + S-adenosyl-L-homocysteine. It catalyses the reaction a 5'-end (N(7)-methyl 5'-triphosphoguanosine)-ribonucleoside in mRNA + S-adenosyl-L-methionine = a 5'-end (N(7)-methyl 5'-triphosphoguanosine)-(2'-O-methyl-ribonucleoside) in mRNA + S-adenosyl-L-homocysteine + H(+). Plays a role in virus budding by binding to the cell membrane and gathering the viral RNA into a nucleocapsid that forms the core of a mature virus particle. During virus entry, may induce genome penetration into the host cytoplasm after hemifusion induced by the surface proteins. Can migrate to the cell nucleus where it modulates host functions. Overcomes the anti-viral effects of host EXOC1 by sequestering and degrading the latter through the proteasome degradation pathway. In terms of biological role, inhibits RNA silencing by interfering with host Dicer. Functionally, prevents premature fusion activity of envelope proteins in trans-Golgi by binding to envelope protein E at pH6.0. After virion release in extracellular space, gets dissociated from E dimers. Its function is as follows. Acts as a chaperone for envelope protein E during intracellular virion assembly by masking and inactivating envelope protein E fusion peptide. prM is the only viral peptide matured by host furin in the trans-Golgi network probably to avoid catastrophic activation of the viral fusion activity in acidic Golgi compartment prior to virion release. prM-E cleavage is inefficient, and many virions are only partially matured. These uncleaved prM would play a role in immune evasion. May play a role in virus budding. Exerts cytotoxic effects by activating a mitochondrial apoptotic pathway through M ectodomain. May display a viroporin activity. In terms of biological role, binds to host cell surface receptor and mediates fusion between viral and cellular membranes. Envelope protein is synthesized in the endoplasmic reticulum in the form of heterodimer with protein prM. They play a role in virion budding in the ER, and the newly formed immature particle is covered with 60 spikes composed of heterodimer between precursor prM and envelope protein E. The virion is transported to the Golgi apparatus where the low pH causes dissociation of PrM-E heterodimers and formation of E homodimers. prM-E cleavage is inefficient, and many virions are only partially matured. These uncleaved prM would play a role in immune evasion. Functionally, involved in immune evasion, pathogenesis and viral replication. Once cleaved off the polyprotein, is targeted to three destinations: the viral replication cycle, the plasma membrane and the extracellular compartment. Essential for viral replication. Required for formation of the replication complex and recruitment of other non-structural proteins to the ER-derived membrane structures. Excreted as a hexameric lipoparticle that plays a role against host immune response. Antagonizing the complement function. Binds to the host macrophages and dendritic cells. Inhibits signal transduction originating from Toll-like receptor 3 (TLR3). Its function is as follows. Disrupts the host endothelial glycocalyx layer of host pulmonary microvascular endothelial cells, inducing degradation of sialic acid and shedding of heparan sulfate proteoglycans. NS1 induces expression of sialidases, heparanase, and activates cathepsin L, which activates heparanase via enzymatic cleavage. These effects are probably linked to the endothelial hyperpermeability observed in severe dengue disease. Component of the viral RNA replication complex that functions in virion assembly and antagonizes the host immune response. In terms of biological role, required cofactor for the serine protease function of NS3. May have membrane-destabilizing activity and form viroporins. Functionally, displays three enzymatic activities: serine protease, NTPase and RNA helicase. NS3 serine protease, in association with NS2B, performs its autocleavage and cleaves the polyprotein at dibasic sites in the cytoplasm: C-prM, NS2A-NS2B, NS2B-NS3, NS3-NS4A, NS4A-2K and NS4B-NS5. NS3 RNA helicase binds RNA and unwinds dsRNA in the 3' to 5' direction. Its function is as follows. Regulates the ATPase activity of the NS3 helicase activity. NS4A allows NS3 helicase to conserve energy during unwinding. Plays a role in the inhibition of the host innate immune response. Interacts with host MAVS and thereby prevents the interaction between RIGI and MAVS. In turn, IFN-beta production is impaired. Interacts with host AUP1 which mediates induction of lipophagy in host cells and facilitates production of virus progeny particles. Functions as a signal peptide for NS4B and is required for the interferon antagonism activity of the latter. In terms of biological role, induces the formation of ER-derived membrane vesicles where the viral replication takes place. Inhibits interferon (IFN)-induced host STAT1 phosphorylation and nuclear translocation, thereby preventing the establishment of cellular antiviral state by blocking the IFN-alpha/beta pathway. Functionally, replicates the viral (+) and (-) RNA genome, and performs the capping of genomes in the cytoplasm. NS5 methylates viral RNA cap at guanine N-7 and ribose 2'-O positions. Besides its role in RNA genome replication, also prevents the establishment of cellular antiviral state by blocking the interferon-alpha/beta (IFN-alpha/beta) signaling pathway. Inhibits host TYK2 and STAT2 phosphorylation, thereby preventing activation of JAK-STAT signaling pathway. May reduce immune responses by preventing the recruitment of the host PAF1 complex to interferon-responsive genes. The sequence is that of Genome polyprotein from Aedes aegypti (Yellowfever mosquito).